Here is a 791-residue protein sequence, read N- to C-terminus: MPVPWFLLSLALGRSPVVLSLERLVGPQDATHCSPVSLEPWGDEERLRVQFLAQQSLSLAPVTAATARTALSGLSGADGRREERGRGKSWVCLSLGGSGNTEPQKKGLSCRLWDSDILCLPGDIVPAPGPVLAPTHLQTELVLRCQKETDCDLCLRVAVHLAVHGHWEEPEDEEKFGGAADSGVEEPRNASLQAQVVLSFQAYPTARCVLLEVQVPAALVQFGQSVGSVVYDCFEAALGSEVRIWSYTQPRYEKELNHTQQLPDCRGLEVWNSIPSCWALPWLNVSADGDNVHLVLNVSEEQHFGLSLYWNQVQGPPKPRWHKNLTGPQIITLNHTDLVPCLCIQVWPLEPDSVRTNICPFREDPRAHQNLWQAARLQLLTLQSWLLDAPCSLPAEAALCWRAPGGDPCQPLVPPLSWENVTVDKVLEFPLLKGHPNLCVQVNSSEKLQLQECLWADSLGPLKDDVLLLETRGPQDNRSLCALEPSGCTSLPSKASTRAARLGEYLLQDLQSGQCLQLWDDDLGALWACPMDKYIHKRWALVWLACLLFAAALSLILLLKKDHAKGWLRLLKQDVRSGAAARGRAALLLYSADDSGFERLVGALASALCQLPLRVAVDLWSRRELSAQGPVAWFHAQRRQTLQEGGVVVLLFSPGAVALCSEWLQDGVSGPGAHGPHDAFRASLSCVLPDFLQGRAPGSYVGACFDRLLHPDAVPALFRTVPVFTLPSQLPDFLGALQQPRAPRSGRLQERAEQVSRALQPALDSYFHPPGTPAPGRGVGPGAGPGAGDGT.

Residues 1–20 (MPVPWFLLSLALGRSPVVLS) form the signal peptide. Residues 21–538 (LERLVGPQDA…CPMDKYIHKR (518 aa)) lie on the Extracellular side of the membrane. Asparagine 189 and asparagine 257 each carry an N-linked (GlcNAc...) asparagine glycan. Cysteine 265 and cysteine 277 are disulfide-bonded. 4 N-linked (GlcNAc...) asparagine glycosylation sites follow: asparagine 284, asparagine 297, asparagine 324, and asparagine 334. 3 cysteine pairs are disulfide-bonded: cysteine 341–cysteine 391, cysteine 343–cysteine 359, and cysteine 400–cysteine 409. N-linked (GlcNAc...) asparagine glycosylation is found at asparagine 420, asparagine 443, and asparagine 477. A disulfide bridge links cysteine 439 with cysteine 453. 2 disulfides stabilise this stretch: cysteine 481–cysteine 488 and cysteine 515–cysteine 529. A helical membrane pass occupies residues 539–559 (WALVWLACLLFAAALSLILLL). Over 560 to 791 (KKDHAKGWLR…GAGPGAGDGT (232 aa)) the chain is Cytoplasmic. The SEFIR domain occupies 583–735 (GRAALLLYSA…LPSQLPDFLG (153 aa)). Residues 762–791 (ALDSYFHPPGTPAPGRGVGPGAGPGAGDGT) are disordered. Over residues 777–791 (RGVGPGAGPGAGDGT) the composition is skewed to gly residues.

Homodimer; disulfide-linked. Heterodimer with IL17RA. Heterodimerization with IL17RA is independent of the cytoplasmic tail. Associates with non-glycosylated IL17RA constitutively. Binding of IL17A and IL17F induces association with glycosylated IL17RA. Forms complexes with 2:1 binding stoichiometry: two receptor chains for one interleukin molecule. IL17A homodimer preferentially drives the formation of IL17RA-IL17RC heterodimeric receptor complex, whereas IL17F homodimer forms predominantly complexes with IL17RC homodimer. IL17A-IL17F forms complexes with IL17RA-IL17RC, but with lower affinity when compared to IL17A homodimer. IL17RC chain cannot distinguish between IL17A and IL17F molecules, potentially enabling the formation of topologically distinct complexes. Interacts (through SEFIR domain and extended downstream region) with TRAF3IP2/ACT1 (phosphorylated). In terms of tissue distribution, expressed in prostate, skeletal muscle, kidney and placenta (at protein level). Expressed in brain, cartilage, colon, heart, intestine, kidney, liver, lung, muscle, placenta, and prostate. Also detected in thyroid, trachea and adrenal gland. Low expression in thymus and leukocytes.

The protein resides in the cell membrane. Functionally, receptor for IL17A and IL17F, major effector cytokines of innate and adaptive immune system involved in antimicrobial host defense and maintenance of tissue integrity. Receptor for IL17A and IL17F, major effector cytokines of innate and adaptive immune system involved in antimicrobial host defense and maintenance of tissue integrity. Receptor for IL17A and IL17F homodimers as part of a heterodimeric complex with IL17RA. Receptor for the heterodimer formed by IL17A and IL17B as part of a heterodimeric complex with IL17RA. Has also been shown to be the cognate receptor for IL17F and to bind IL17A with high affinity without the need for IL17RA. Upon binding of IL17F homodimer triggers downstream activation of TRAF6 and NF-kappa-B signaling pathway. Induces transcriptional activation of IL33, a potent cytokine that stimulates group 2 innate lymphoid cells and adaptive T-helper 2 cells involved in pulmonary allergic response to fungi. Promotes sympathetic innervation of peripheral organs by coordinating the communication between gamma-delta T cells and parenchymal cells. Stimulates sympathetic innervation of thermogenic adipose tissue by driving TGFB1 expression. Binding of IL17A-IL17F to IL17RA-IL17RC heterodimeric receptor complex triggers homotypic interaction of IL17RA and IL17RC chains with TRAF3IP2 adapter through SEFIR domains. This leads to downstream TRAF6-mediated activation of NF-kappa-B and MAPkinase pathways ultimately resulting in transcriptional activation of cytokines, chemokines, antimicrobial peptides and matrix metalloproteinases, with potential strong immune inflammation. Primarily induces neutrophil activation and recruitment at infection and inflammatory sites. Stimulates the production of antimicrobial beta-defensins DEFB1, DEFB103A, and DEFB104A by mucosal epithelial cells, limiting the entry of microbes through the epithelial barriers. Its function is as follows. Receptor for both IL17A and IL17F. In terms of biological role, does not bind IL17A or IL17F. The polypeptide is Interleukin-17 receptor C (IL17RC) (Homo sapiens (Human)).